The sequence spans 714 residues: Angiogenic factor with G patch and FHA domains 1 (714 aa).

The span at 1–18 shows a compositional bias: pro residues; it reads MASEAPSPPRSPPPPTSP. Disordered regions lie at residues 1 to 22, 259 to 307, and 322 to 384; these read MASE…EPEL, QPYP…HTSC, and IGIH…SYDE. N-acetylalanine is present on A2. 2 positions are modified to phosphoserine: S7 and S11. Positions 18–88 form a coiled coil; that stretch reads PEPELAQLRR…QRGRNEDNKK (71 aa). The span at 279–298 shows a compositional bias: basic and acidic residues; that stretch reads KDPDSSATNEEKDLNSEDQK. Over residues 335–355 the composition is skewed to polar residues; that stretch reads VPTSGNTIESPLHENISNSTS. S344 is modified (phosphoserine). Residues 364–383 are compositionally biased toward acidic residues; the sequence is TDSEPEEGEITDSQTEDSYD. The 54-residue stretch at 434–487 folds into the FHA domain; it reads ATIGREKDMEHTLRIPEVGVSKFHAEIYFDHDLQSYVLVDQGSQNGTIVNGKQI. Residues 586–609 are compositionally biased toward basic and acidic residues; it reads KYKDRAGKRREQVGSEGTFQRDDA. Disordered regions lie at residues 586–617 and 655–714; these read KYKD…HSEI and RTHA…GTLE. The 47-residue stretch at 619–665 folds into the G-patch domain; sequence DSNKGRKMLEKMGWKKGEGLGKDGGGMKTPIQLQLRRTHAGLGTGKP. N6-acetyllysine is present on K664. Basic and acidic residues predominate over residues 680–690; it reads KNWDKARERFT.

In terms of assembly, interacts with the secreted angiogenic factor TNFSF12. Widely expressed. Expressed in endothelial cells, vascular smooth muscle cells and osteoblasts. Expressed in umbilical vein endothelial cells and microvascular endothelial cells.

Its subcellular location is the cytoplasm. The protein resides in the secreted. Promotes angiogenesis and the proliferation of endothelial cells. Able to bind to endothelial cells and promote cell proliferation, suggesting that it may act in an autocrine fashion. In Homo sapiens (Human), this protein is Angiogenic factor with G patch and FHA domains 1 (AGGF1).